The primary structure comprises 1070 residues: MLEGGNEEISTIPGFNQIQFEGFCRFIDQGLTEELYKFPKIEDTDQEIEFQLFVETYQLVEPLIKERDAVYESLTYSSELYVSAGLIWKTSRDMQEQTIFIGNIPLMNSLGTSIVNGIYRIVINQILQSPGIYYRSELDHNGISVYTGTIISDWGGRLELEIDRKARIWARVSRKQKISILVLLSAMGLNLREILENVCYPEIFLSFLKDKEKKKIKSKENAILEFYQQFACVGGDPVFSESLCKELQKKFFQQRCELGRIGRRNMNRRLNLDIPQNTTFLLPRDILAAADHLIGMKFGMGILDDMNHLKNKRIRSVADLLQDQFGLALVRLENMVRGTMCGAIRHKLIPTPQNLVTSTTLTTTYESFFGLHPLSQVLDRTNPLTQIVHGRKASYLGPGGLTGRTASFRIRDIHPSHYGRICPIDTSEGINVGLIGSLAIHARIGHWGSLESPFYEISERSKKVRMLYLSPSIDEYYMVAAGNSLALNRGSQEEQVVPARYRQEFLTIEWEQVHLRSIFPFQYFSIGASLIPFIEHNDANRALMSSNMQRQAVPLSRSEKCIVGTGLECQVALDSGVPTIAEHQGKIIYTDTEKIILSGNRDTLSIPLVIYQRSNKNTCMHQKPQVSRGKCIKKGQILADGAATVGGELALGKNVLVAYMPWEGYNSEDAVLINERLVYEDIYTSFHIRKYEIHTHVTSHGPERITNEIPHLEAHLLRNLDKNGIVMLGSWVETGDILVGKLTPQMAKESSYAPEDRLLRAILGIQISISKETCLKLPIGGRGRVIDVRWIQKKGGSSYNPETIRVYISQKREIKVGDKVAGRHGNKGIVSKILPRQDMPYLQDGRPVDMVFNPLGVPSRMNVGQIFECSLGLAGGLLDRHYRIAPFDERYEQEASRKLVFSELYEASKQTANPWVFEPEYPGKSRIFDGRTGDPFEQPVIIGKPYILKLIHQVDDKIHGRCSGHYALVTQQPLRGRAKQGGQRVGEMEVWALEGFGVAHILQEMLTYKSDHIRARQEVLGTTMVGGPIPKPEDAPESFRLLVRELRSLALELNHFLVSEKNFQINRKDV.

The protein belongs to the RNA polymerase beta chain family. In terms of assembly, in plastids the minimal PEP RNA polymerase catalytic core is composed of four subunits: alpha, beta, beta', and beta''. When a (nuclear-encoded) sigma factor is associated with the core the holoenzyme is formed, which can initiate transcription.

It localises to the plastid. The protein localises to the chloroplast. The enzyme catalyses RNA(n) + a ribonucleoside 5'-triphosphate = RNA(n+1) + diphosphate. DNA-dependent RNA polymerase catalyzes the transcription of DNA into RNA using the four ribonucleoside triphosphates as substrates. In Morus indica (Mulberry), this protein is DNA-directed RNA polymerase subunit beta.